We begin with the raw amino-acid sequence, 432 residues long: Interleukin-11 receptor subunit alpha-2 (432 aa).

The signal sequence occupies residues 1 to 23 (MSSSCSGLTRVLVAVATALVSSS). At 24–372 (SPCPQAWGPP…DPLEQVAVLA (349 aa)) the chain is on the extracellular side. The region spanning 27 to 110 (PQAWGPPGVQ…SGGMVTLKLG (84 aa)) is the Ig-like C2-type domain. 3 cysteine pairs are disulfide-bonded: Cys48-Cys94, Cys120-Cys130, and Cys170-Cys180. 2 consecutive Fibronectin type-III domains span residues 112–219 (PPAR…LRPD) and 220–317 (PPQG…TPST). N-linked (GlcNAc...) asparagine glycosylation is present at Asn127. The tract at residues 151-170 (KTLPGAESQRESPSTGPWPC) is disordered. Asn194 carries an N-linked (GlcNAc...) asparagine glycan. The WSXWS motif motif lies at 304 to 308 (WSAWS). Residues 373-393 (SLGIFSCLGLAVGALALGLWL) traverse the membrane as a helical segment. The Cytoplasmic portion of the chain corresponds to 394 to 432 (RLRRSGKEGPQKPGLLAPMIPVEKLPGIPNLQRTPENFS).

It belongs to the type I cytokine receptor family. Type 3 subfamily. In terms of assembly, on ligand binding, forms a multimer complex with IL6ST/gp130. Expression restricted to testis, lymph node and thymus. Highest level in testis.

The protein localises to the membrane. Functionally, receptor for interleukin-11. The receptor systems for IL6, LIF, OSM, CNTF, IL11 and CT1 can utilize IL6ST for initiating signal transmission. The IL11/IL11RA/IL6ST complex may be involved in the control of proliferation and/or differentiation of skeletogenic progenitor or other mesenchymal cells. This chain is Interleukin-11 receptor subunit alpha-2 (Il11ra2), found in Mus musculus (Mouse).